A 357-amino-acid chain; its full sequence is Acyl-coenzyme A diphosphatase NUDT19 (357 aa).

The 233-residue stretch at 10-242 (AATVMLAAGW…IWLAPPQFYE (233 aa)) folds into the Nudix hydrolase domain. The interval 72-94 (PRFGLGPEPPRQPPFPGLSHGDA) is disordered. The segment covering 78–87 (PEPPRQPPFP) has biased composition (pro residues). The Nudix box motif lies at 97–118 (AALPDDVALRICAIRETFEEAG). Positions 112 and 116 each coordinate Mg(2+). K300 is subject to N6-succinyllysine. The short motif at 355 to 357 (AHL) is the Microbody targeting signal element.

It belongs to the Nudix hydrolase family. As to quaternary structure, monomer. Mg(2+) serves as cofactor. The cofactor is Mn(2+).

The protein localises to the peroxisome. The catalysed reaction is an acyl-CoA + H2O = an acyl-4'-phosphopantetheine + adenosine 3',5'-bisphosphate + 2 H(+). It carries out the reaction CoA + H2O = (R)-4'-phosphopantetheine + adenosine 3',5'-bisphosphate + 2 H(+). It catalyses the reaction hexanoyl-CoA + H2O = hexanoyl-4'-phosphopantetheine + adenosine 3',5'-bisphosphate + 2 H(+). The enzyme catalyses octanoyl-CoA + H2O = S-octanoyl-4'-phosphopantetheine + adenosine 3',5'-bisphosphate + 2 H(+). The catalysed reaction is butanoyl-CoA + H2O = S-butanoyl-4'-phosphopantetheine + adenosine 3',5'-bisphosphate + 2 H(+). It carries out the reaction propanoyl-CoA + H2O = propanoyl-4'-phosphopantetheine + adenosine 3',5'-bisphosphate + 2 H(+). It catalyses the reaction malonyl-CoA + H2O = malonyl-4'-phosphopantetheine + adenosine 3',5'-bisphosphate + 2 H(+). The enzyme catalyses succinyl-CoA + H2O = succinyl-4'-phosphopantetheine + adenosine 3',5'-bisphosphate + 2 H(+). The catalysed reaction is choloyl-CoA + H2O = S-choloyl-4'-phosphopantetheine + adenosine 3',5'-bisphosphate + 2 H(+). It carries out the reaction 4,8-dimethylnonanoyl-CoA + H2O = S-(4,8-dimethylnonanoyl)-4'-phosphopantetheine + adenosine 3',5'-bisphosphate + 2 H(+). It catalyses the reaction (9Z,12Z,15Z)-octadecatrienoyl-CoA + H2O = S-(9Z,12Z,15Z-octadecatrienoyl)-4'-phosphopantetheine + adenosine 3',5'-bisphosphate + 2 H(+). The enzyme catalyses (9Z,12Z)-octadecadienoyl-CoA + H2O = S-(9Z,12Z-octadecadienoyl)-4'-phosphopantetheine + adenosine 3',5'-bisphosphate + 2 H(+). The catalysed reaction is (9Z)-hexadecenoyl-CoA + H2O = S-(9Z-hexadecenoyl)-4'-phosphopantetheine + adenosine 3',5'-bisphosphate + 2 H(+). It carries out the reaction (9Z)-tetradecenoyl-CoA + H2O = S-(9Z-tetradecenoyl)-4'-phosphopantetheine + adenosine 3',5'-bisphosphate + 2 H(+). It catalyses the reaction (6Z)-octenoyl-CoA + H2O = S-(6Z-octenoyl)-4'-phosphopantetheine + adenosine 3',5'-bisphosphate + 2 H(+). The enzyme catalyses hexadecanoyl-CoA + H2O = S-hexadecanoyl-4'-phosphopantetheine + adenosine 3',5'-bisphosphate + 2 H(+). The catalysed reaction is tetradecanoyl-CoA + H2O = tetradecanoyl-4'-phosphopantetheine + adenosine 3',5'-bisphosphate + 2 H(+). It carries out the reaction dodecanoyl-CoA + H2O = S-dodecanoyl-4'-phosphopantetheine + adenosine 3',5'-bisphosphate + 2 H(+). It catalyses the reaction a 5'-end CoA-ribonucleoside in mRNA + H2O = a 5'-end phospho-adenosine-phospho-ribonucleoside in mRNA + (R)-4'-phosphopantetheine + 2 H(+). In terms of biological role, fatty acyl-coenzyme A (CoA) diphosphatase that hydrolyzes fatty acyl-CoA to yield acyl-4'-phosphopantetheine and adenosine 3',5'-bisphosphate. Mediates the hydrolysis of a wide range of CoA esters, including choloyl-CoA and branched-chain fatty-acyl-CoA esters and at low substrate concentrations medium and long-chain fatty-acyl-CoA esters are the primary substrates. Highest activity seen with medium-chain acyl-CoA esters and higher rates of activity seen with the unsaturated acyl-CoA esters compared with the saturated esters. Exhibits decapping activity towards dpCoA-capped RNAs in vitro. In Mus caroli (Ryukyu mouse), this protein is Acyl-coenzyme A diphosphatase NUDT19 (Nudt19).